We begin with the raw amino-acid sequence, 166 residues long: Large ribosomal subunit protein uL10 (166 aa).

The protein belongs to the universal ribosomal protein uL10 family. As to quaternary structure, part of the ribosomal stalk of the 50S ribosomal subunit. The N-terminus interacts with L11 and the large rRNA to form the base of the stalk. The C-terminus forms an elongated spine to which L12 dimers bind in a sequential fashion forming a multimeric L10(L12)X complex.

Functionally, forms part of the ribosomal stalk, playing a central role in the interaction of the ribosome with GTP-bound translation factors. The chain is Large ribosomal subunit protein uL10 from Bacillus mycoides (strain KBAB4) (Bacillus weihenstephanensis).